We begin with the raw amino-acid sequence, 378 residues long: MPYSSLHPSIPQPRGLRAQVAALVLLGACLVALWGLGELPEYTLRWLVLHLASQQIGLLVKGLCSLAEELCHVHSRYQSSYWRAARACLGCPIRCGALLLLSCYFYFSIRDKAGLPLPWMLALLGLSQALNILLGLQHLAPAEVSAICEKRNFNVAHGLAWSYYIGYLRLILPGLRARIQAYNQRHKNVLGGIGNHRLHILFPLDCGVPDDLSVADPNIRFLHELPQQSADRAGIKGRVYTNSIYELLENGQPAGVCVLGYATPLQTLFAMSQDGRAGFSREDRLEQAKLFCRTLEDILADAPEAQNNCRLIVYQEPTEGGSFSLSQEILRHLRQEEREVTMGSAETSVVPTSSTLSQEPELLISGMEQPLPLRSDIF.

At 1–17 (MPYSSLHPSIPQPRGLR) the chain is on the cytoplasmic side. Positions 1 to 190 (MPYSSLHPSI…AYNQRHKNVL (190 aa)) are mediates interaction with ZDHHC1 and ZDHHC11. A helical transmembrane segment spans residues 18 to 34 (AQVAALVLLGACLVALW). At 35-44 (GLGELPEYTL) the chain is on the lumenal side. A helical membrane pass occupies residues 45–69 (RWLVLHLASQQIGLLVKGLCSLAEE). The Cytoplasmic segment spans residues 70–91 (LCHVHSRYQSSYWRAARACLGC). 2 S-palmitoyl cysteine lipidation sites follow: Cys-88 and Cys-91. A helical membrane pass occupies residues 92-106 (PIRCGALLLLSCYFY). The Lumenal portion of the chain corresponds to 107–116 (FSIRDKAGLP). A helical membrane pass occupies residues 117–134 (LPWMLALLGLSQALNILL). Residues 135–378 (GLQHLAPAEV…QPLPLRSDIF (244 aa)) are Cytoplasmic-facing. Lys-150 participates in a covalent cross-link: Glycyl lysine isopeptide (Lys-Gly) (interchain with G-Cter in ubiquitin). The segment at 153–339 (FNVAHGLAWS…LRHLRQEERE (187 aa)) is cyclic dinucleotide-binding domain (CBD). Residues Ser-162 and Tyr-167 each coordinate 2',3'-cGAMP. Positions 162 and 167 each coordinate 3',3'-c-di-GMP. Tyr-167 provides a ligand contact to 2',3'-cUAMP. Lys-236 participates in a covalent cross-link: Glycyl lysine isopeptide (Lys-Gly) (interchain with G-Cter in ubiquitin). 2',3'-cGAMP contacts are provided by Arg-238 and Thr-263. Residues Arg-238 and Thr-263 each contribute to the 2',3'-cUAMP site. 3',3'-c-di-GMP contacts are provided by residues 238–241 (RVYT) and Thr-263. Positions 339-378 (EVTMGSAETSVVPTSSTLSQEPELLISGMEQPLPLRSDIF) are C-terminal tail (CTT). Ser-354 carries the post-translational modification Phosphoserine. Thr-355 is subject to Phosphothreonine. 2 positions are modified to phosphoserine; by TBK1: Ser-357 and Ser-365. The pLxIS motif signature appears at 362 to 365 (LLIS).

This sequence belongs to the STING family. As to quaternary structure, homodimer; forms a homodimer in absence of cyclic nucleotide (c-di-GMP or cGAMP); 'Lys-63'-linked ubiquitination at Lys-150 is required for homodimerization. Homotetramer; in presence of cyclic nucleotide (c-di-GMP or cGAMP), forms tetramers and higher-order oligomers through side-by-side packing. Interacts (when phosphorylated) with IRF3; following activation and phosphorylation on the pLxIS motif by TBK1, recruits IRF3. Interacts with DDX58/RIG-I, MAVS and SSR2. Interacts with RNF5 and TRIM56. Interacts with TBK1; when homodimer, leading to subsequent production of IFN-beta. Interacts with IFIT1 and IFIT2. Interacts with TRIM29; this interaction induces STING1 ubiquitination and subsequent degradation. Associates with the MHC-II complex. Interacts with STEEP1; interaction takes place upon cGAMP-activation and STING1 phosphorylation by MAP3K7/TAK1 and promotes STING1 translocation to COPII vesicles. Interacts with SEC24A, SEC24B and SEC24C; promoting translocation to COPII vesicles. Interacts (when ubiquitinated) with SQSTM1; leading to relocalization to autophagosomes. Interacts with SURF4. Interacts with HNRNPA2B1. Interacts with ZDHHC1; ZDHHC1 constitutively interacts with STING1 and in presence of DNA viruses activates it by promoting its cGAMP-induced oligomerization and the recruitment of downstream signaling components. Interacts with ZDHHC11; in presence of DNA viruses promotes the recruitment of IRF3 to STING1. Interacts with TOMM70. Interacts with TAB1; promoting recruitment of TAB1 to the endoplasmic reticulum membrane and subsequent activation of MAP3K7/TAK1. Interacts (via transmembrane domain) with TMEM203. Interacts with DDX41. (Microbial infection) Interacts with African swine fever virus/ASFV protein A528R; this interaction mediates STING1 degradation. In terms of assembly, (Microbial infection) Interacts with African swine fever virus/ASFV minor capsid protein p17. As to quaternary structure, (Microbial infection) Interacts with Pseudorabies virus protein UL13; this interaction mediates STING1 degradation in a RNF5-dependent manner. In terms of processing, phosphorylation by TBK1 leads to activation and production of IFN-beta. Following cyclic nucleotide (c-di-GMP or cGAMP)-binding, activation and translocation from the endoplasmic reticulum, STING1 is phosphorylated by TBK1 at Ser-365 in the pLxIS motif. The phosphorylated pLxIS motif constitutes an IRF3-binding motif, leading to recruitment of the transcription factor IRF3 to induce type-I interferons and other cytokines. Phosphorylated on tyrosine residues upon MHC-II aggregation. Dephosphorylation by PPP6C leads to inactivation and decreased production of IFN-beta. Phosphorylation at Ser-357 is also required to activate IRF3. Phosphorylation at Ser-354 by MAP3K7/TAK1 facilitates its interaction with STEEP1, promoting STING1 translocation to COPII vesicles. Ubiquitinated. Ubiquitinated via 'Lys-63'-linked ubiquitin chains in response to double-stranded DNA treatment, leading to relocalization to autophagosomes and subsequent degradation; this process is dependent on SQSTM1. 'Lys-63'-linked ubiquitination mediated by TRIM56 at Lys-150 promotes homodimerization and recruitment of the antiviral kinase TBK1 and subsequent production of IFN-beta. 'Lys-48'-linked polyubiquitination at Lys-150 occurring after viral infection is mediated by RNF5 and leads to proteasomal degradation. 'Lys-11'-linked polyubiquitination at Lys-150 by RNF26 leads to stabilize STING1: it protects STING1 from RNF5-mediated 'Lys-48'-linked polyubiquitination. 'Lys-33'-linked and 'Lys-48'-linked deubiquitinated by USP20; leading to its stabilization and promotion of innate antiviral response. 'Lys-48'-linked deubiquitinated by USP44; leading to its stabilization and promotion of innate antiviral response. Deubiquitinated by USP13; leading to inhibition of innate antiviral response. 'Lys-63'-linked deubiquitinated by USP49; leading to inhibition of the subsequent recruitment of TBK1 to the signaling complex. 'Lys-63'-linked ubiquitination mediated by RNF39 promotes the activation of the cGAS-STING pathway. Post-translationally, palmitoylation takes place in the Golgi apparatus and creates a platform for the recruitment of TBK1. In terms of tissue distribution, expressed at higher level in the spleen, lymph node, lung and bone marrow, followed by the small intestine, heart, liver and brain, and to a lesser extent in the stomach and kidney.

It localises to the endoplasmic reticulum membrane. Its subcellular location is the cytoplasm. The protein localises to the perinuclear region. The protein resides in the endoplasmic reticulum-Golgi intermediate compartment membrane. It is found in the golgi apparatus membrane. It localises to the cytoplasmic vesicle. Its subcellular location is the autophagosome membrane. The protein localises to the mitochondrion outer membrane. The protein resides in the cell membrane. The enzyme catalyses H(+)(in) = H(+)(out). In terms of biological role, facilitator of innate immune signaling that acts as a sensor of cytosolic DNA from bacteria and viruses and promotes the production of type I interferon (IFN-alpha and IFN-beta). Innate immune response is triggered in response to non-CpG double-stranded DNA from viruses and bacteria delivered to the cytoplasm. Acts by binding cyclic dinucleotides: recognizes and binds cyclic di-GMP (c-di-GMP), a second messenger produced by bacteria, cyclic UMP-AMP (2',3'-cUAMP), and cyclic GMP-AMP (cGAMP), a messenger produced by CGAS in response to DNA virus in the cytosol. Upon binding to c-di-GMP, cUAMP or cGAMP, STING1 oligomerizes, translocates from the endoplasmic reticulum and is phosphorylated by TBK1 on the pLxIS motif, leading to recruitment and subsequent activation of the transcription factor IRF3 to induce expression of type I interferon and exert a potent anti-viral state. Exhibits 2',3' phosphodiester linkage-specific ligand recognition: can bind both 2'-3' linked cGAMP (2'-3'-cGAMP) and 3'-3' linked cGAMP but is preferentially activated by 2'-3' linked cGAMP. The preference for 2'-3'-cGAMP, compared to other linkage isomers is probably due to the ligand itself, whichs adopts an organized free-ligand conformation that resembles the STING1-bound conformation and pays low energy costs in changing into the active conformation. In addition to promote the production of type I interferons, plays a direct role in autophagy. Following cGAMP-binding, STING1 buds from the endoplasmic reticulum into COPII vesicles, which then form the endoplasmic reticulum-Golgi intermediate compartment (ERGIC). The ERGIC serves as the membrane source for WIPI2 recruitment and LC3 lipidation, leading to formation of autophagosomes that target cytosolic DNA or DNA viruses for degradation by the lysosome. Promotes autophagy by acting as a proton channel that directs proton efflux from the Golgi to facilitate MAP1LC3B/LC3B lipidation. The autophagy- and interferon-inducing activities can be uncoupled and autophagy induction is independent of TBK1 phosphorylation. Autophagy is also triggered upon infection by bacteria: following c-di-GMP-binding, which is produced by live Gram-positive bacteria, promotes reticulophagy. May be involved in translocon function, the translocon possibly being able to influence the induction of type I interferons. May be involved in transduction of apoptotic signals via its association with the major histocompatibility complex class II (MHC-II). The sequence is that of Stimulator of interferon genes protein from Sus scrofa (Pig).